Reading from the N-terminus, the 145-residue chain is Hemoglobin subunit beta (145 aa).

A Globin domain is found at 1-145 (MLTSEEKAAV…VANALAHRYH (145 aa)). Thr11 is subject to Phosphothreonine. N6-acetyllysine is present on Lys58. Heme b is bound at residue His62. An N6-acetyllysine modification is found at Lys81. Residue His91 coordinates heme b. Cys92 is modified (S-nitrosocysteine).

It belongs to the globin family. As to quaternary structure, heterotetramer of two alpha chains and two beta chains. Red blood cells.

Its function is as follows. Involved in oxygen transport from the lung to the various peripheral tissues. The chain is Hemoglobin subunit beta (HBB) from Rangifer tarandus (Reindeer).